The sequence spans 105 residues: MAEWNGEYVSPYAEHGKKSEQVKKITVSIPLKVLKILTDERTRRQVNNLRHATNSELLCEAFLHAFTGQPLPNDEDLRKERSDEIPEAAKIIMREMGIDPDTWEY.

The protein belongs to the MetJ family. In terms of assembly, homodimer.

It localises to the cytoplasm. In terms of biological role, this regulatory protein, when combined with SAM (S-adenosylmethionine) represses the expression of the methionine regulon and of enzymes involved in SAM synthesis. The sequence is that of Met repressor from Pectobacterium carotovorum subsp. carotovorum (strain PC1).